We begin with the raw amino-acid sequence, 366 residues long: MTVTGIIAEFNPFHYGHQYLLSQAKGLKIVAMSGNFVQRGEPALVDKWVRAQMALENGADLVVELPFLVSVQSADYFAQGAVDILMRLGIDTLAFGTEQLFDYQKLSRLYSEQAEHMTAYLATLPDHLSYPQKTQSMWEAFAGLSATGDRPNHLLALSYVKASAGKKLQLQPIKRLGAGFHSEAKDQCLSSATAIRKHIADRAFVEKSSPNAALILRAPQVTWEHYFPLLKYHILTAPDLTQFFQVNDELASRISAAIRSVATVDELVEAVATKHYTKARVRRVLTYILVKAVEAPLPEGIHVLGFSKKGQAHLKTIKASVPLISRIGAKPWDQLTQRADTVYQLGHMDMPEQTWGRVPIRPGAMN.

ATP-binding positions include 7 to 20 (IAEF…HQYL), Gly-96, Asn-152, and Arg-175.

It belongs to the TmcAL family.

It localises to the cytoplasm. It catalyses the reaction cytidine(34) in elongator tRNA(Met) + acetate + ATP = N(4)-acetylcytidine(34) in elongator tRNA(Met) + AMP + diphosphate. Its function is as follows. Catalyzes the formation of N(4)-acetylcytidine (ac(4)C) at the wobble position of elongator tRNA(Met), using acetate and ATP as substrates. First activates an acetate ion to form acetyladenylate (Ac-AMP) and then transfers the acetyl group to tRNA to form ac(4)C34. The protein is tRNA(Met) cytidine acetate ligase of Streptococcus equi subsp. zooepidemicus (strain MGCS10565).